The primary structure comprises 196 residues: Thymidine kinase (196 aa).

ATP-binding positions include Gly-9–Ser-16 and Asp-85–Gln-88. Glu-86 functions as the Proton acceptor in the catalytic mechanism. Residues Cys-143, Cys-146, Cys-180, and His-183 each coordinate Zn(2+).

This sequence belongs to the thymidine kinase family. As to quaternary structure, homotetramer.

The protein localises to the cytoplasm. The enzyme catalyses thymidine + ATP = dTMP + ADP + H(+). This chain is Thymidine kinase, found in Streptococcus thermophilus (strain CNRZ 1066).